The chain runs to 387 residues: Patatin group D-3 (387 aa).

An N-terminal signal peptide occupies residues 1–23 (MATTKSFLILIVMILATTSSTFA). Positions 32 to 230 (LSIDGGGIKG…TVADPALLSI (199 aa)) constitute a PNPLA domain. Positions 36-41 (GGGIKG) match the GXGXXG motif. The GXSXG signature appears at 75-79 (GTSTG). Catalysis depends on Ser-77, which acts as the Nucleophile. An N-linked (GlcNAc...) asparagine glycan is attached at Asn-115. Asp-216 serves as the catalytic Proton acceptor. The DGA/G signature appears at 216-218 (DGA). Residues 361–385 (ETYEEALKRFAKLLSDRKKLRANKA) are a coiled coil.

It belongs to the patatin family. In terms of tissue distribution, tuber.

The protein resides in the vacuole. Functionally, probable lipolytic acyl hydrolase (LAH), an activity which is thought to be involved in the response of tubers to pathogens. This is Patatin group D-3 from Solanum tuberosum (Potato).